Consider the following 546-residue polypeptide: Probable E3 ubiquitin-protein ligase NGR_a03640 (546 aa).

Residues 1-70 (MNVQRPGLAV…RPWEGRPQEA (70 aa)) form a disordered region. The interaction with target proteins stretch occupies residues 1–248 (MNVQRPGLAV…YAGPQIFLPM (248 aa)). Residues 22 to 48 (SEPGSPAAAARWVEASTEAEASAASSS) are compositionally biased toward low complexity. Residues 58–67 (AEERPWEGRP) show a composition bias toward basic and acidic residues. LRR repeat units follow at residues 104–125 (GLRR…LPGT), 126–144 (LLEL…DLPA), 145–166 (GLQR…LPAA), 167–186 (LEWL…MIPP), and 187–208 (ELIW…LLTQ). Residues 249–256 (GPVELARR) are linker. Positions 257–546 (PLHEVVADWL…KVLRGRGLEL (290 aa)) constitute an NEL domain. Positions 257 to 546 (PLHEVVADWL…KVLRGRGLEL (290 aa)) are E3 ubiquitin-protein ligase catalytic domain. The Glycyl thioester intermediate role is filled by Cys-338.

The protein belongs to the LRR-containing bacterial E3 ligase family. In terms of processing, ubiquitinated in the presence of host E1 ubiquitin-activating enzyme, E2 ubiquitin-conjugating enzyme and ubiquitin.

The protein localises to the secreted. It localises to the host cytoplasm. In terms of biological role, effector proteins function to alter host cell physiology and promote bacterial survival in host tissues. This protein is an E3 ubiquitin ligase that interferes with host's ubiquitination pathway. The chain is Probable E3 ubiquitin-protein ligase NGR_a03640 from Sinorhizobium fredii (strain NBRC 101917 / NGR234).